Consider the following 217-residue polypeptide: 3,4-dihydroxy-2-butanone 4-phosphate synthase (217 aa).

D-ribulose 5-phosphate is bound by residues 37-38, D42, 150-154, and E174; these read RE and RRGHT. E38 lines the Mg(2+) pocket. Mg(2+) is bound at residue H153.

It belongs to the DHBP synthase family. Homodimer. The cofactor is Mg(2+). Mn(2+) serves as cofactor.

The enzyme catalyses D-ribulose 5-phosphate = (2S)-2-hydroxy-3-oxobutyl phosphate + formate + H(+). The protein operates within cofactor biosynthesis; riboflavin biosynthesis; 2-hydroxy-3-oxobutyl phosphate from D-ribulose 5-phosphate: step 1/1. In terms of biological role, catalyzes the conversion of D-ribulose 5-phosphate to formate and 3,4-dihydroxy-2-butanone 4-phosphate. The sequence is that of 3,4-dihydroxy-2-butanone 4-phosphate synthase from Shewanella sp. (strain MR-4).